Here is a 1177-residue protein sequence, read N- to C-terminus: Putative ATP-dependent RNA helicase TDRD12 (1177 aa).

A Tudor 1 domain is found at 56-118 (TLEEGQVCVV…RVVVESFMQL (63 aa)). The 189-residue stretch at 447-635 (WPPIARGCDV…KEFMNDPYIV (189 aa)) folds into the Helicase ATP-binding domain. 460 to 467 (SHCESNPL) is a binding site for ATP. Positions 574 to 577 (DEVE) match the DEAH box motif. The region spanning 900–999 (IVDKHMDLYA…HTLPPQAVEF (100 aa)) is the Tudor 2 domain. The interval 1098 to 1177 (EESLSQTPPR…VFKRWLSSNR (80 aa)) is disordered. The span at 1100–1115 (SLSQTPPRVTGTSPAQ) shows a compositional bias: polar residues.

Component of a mRNP complex containing PIWIL2, TDRD1 and piRNAs. Component of the PET complex, at least composed of EXD1, PIWIL2, TDRD12 and piRNAs.

It catalyses the reaction ATP + H2O = ADP + phosphate + H(+). In terms of biological role, probable ATP-binding RNA helicase required during spermatogenesis to repress transposable elements and preventing their mobilization, which is essential for the germline integrity. Acts via the piRNA metabolic process, which mediates the repression of transposable elements during meiosis by forming complexes composed of piRNAs and Piwi proteins and governs the methylation and subsequent repression of transposons. Involved in the secondary piRNAs metabolic process. Acts via the PET complex, a multiprotein complex required during the secondary piRNAs metabolic process for the PIWIL2 slicing-triggered loading of PIWIL4 piRNAs. This is Putative ATP-dependent RNA helicase TDRD12 (TDRD12) from Homo sapiens (Human).